Here is a 725-residue protein sequence, read N- to C-terminus: Beta-adducin (725 aa).

The disordered stretch occupies residues 1–22 (MSEDTVPEAASPPPSQGQHYFD). Residues serine 11 and serine 25 each carry the phosphoserine modification. Threonine 55 bears the Phosphothreonine mark. Serine 60 and serine 344 each carry phosphoserine. Residues 425–444 (KQQKEKTRWLNTPNTYLRVN) form an interaction with calmodulin region. Residues 525–725 (AEKSRSPSTE…KSKKKEKVES (201 aa)) form a disordered region. A phosphoserine mark is found at serine 530 and serine 532. Threonine 533 is subject to Phosphothreonine. A Phosphoserine modification is found at serine 535. A Phosphothreonine modification is found at threonine 561. The segment covering 566 to 589 (EEYKKEVERKKLEQEQEGEKDIAT) has biased composition (basic and acidic residues). Serine 594, serine 598, serine 602, and serine 606 each carry phosphoserine. A compositionally biased stretch (polar residues) spans 596-621 (VKSTPASPVQSPSKAGTKSPAVSPSK). Threonine 612 is subject to Phosphothreonine. 3 positions are modified to phosphoserine: serine 614, serine 618, and serine 620. A compositionally biased stretch (basic and acidic residues) spans 622 to 631 (TSEDTKKTEV). A Phosphothreonine modification is found at threonine 674. Serine 678, serine 685, serine 688, serine 692, serine 696, serine 698, serine 700, serine 702, and serine 712 each carry phosphoserine. Low complexity predominate over residues 687–700 (TSGPLSPEGSPSKS). The segment covering 701–725 (PSKKKKKFRTPSFLKKSKKKEKVES) has biased composition (basic residues). An interaction with calmodulin region spans residues 703-720 (KKKKKFRTPSFLKKSKKK).

Belongs to the aldolase class II family. Adducin subfamily. In terms of assembly, found in a complex with ADD2, DMTN and SLC2A1. Interacts with SLC2A1. Heterodimer of an alpha and a beta subunit.

The protein localises to the cytoplasm. The protein resides in the cytoskeleton. It is found in the cell membrane. Its function is as follows. Membrane-cytoskeleton-associated protein that promotes the assembly of the spectrin-actin network. Binds to the erythrocyte membrane receptor SLC2A1/GLUT1 and may therefore provide a link between the spectrin cytoskeleton to the plasma membrane. Binds to calmodulin. Calmodulin binds preferentially to the beta subunit. This is Beta-adducin (Add2) from Mus musculus (Mouse).